Reading from the N-terminus, the 274-residue chain is Copper chaperone for superoxide dismutase (274 aa).

The region spanning 11-74 is the HMA domain; the sequence is VCALEFAVQM…LLESTGRQAV (64 aa). Cu cation-binding residues include C22 and C25. Residue K76 forms a Glycyl lysine isopeptide (Lys-Gly) (interchain with G-Cter in ubiquitin) linkage. The superoxide dismutase-like stretch occupies residues 88–234; sequence AAVAILEGCG…LACGIIARSA (147 aa). A disulfide bridge connects residues C141 and C227. Zn(2+) is bound by residues H147, H155, H164, and D167. Residues K189, K216, and K241 each participate in a glycyl lysine isopeptide (Lys-Gly) (interchain with G-Cter in ubiquitin) cross-link. Residues C244 and C246 each contribute to the Cu cation site. S267 is modified (phosphoserine).

In the C-terminal section; belongs to the Cu-Zn superoxide dismutase family. Homodimer, and heterodimer with SOD1. Interacts with COMMD1. Interacts with XIAP/BIRC4. Interacts with SLC31A1(via C-terminal domain); this interaction is Cu(1+)-mediated. The heterodimer CCS:SOD1 interacts with SLC31A1; this heterotrimer is Cu(1+)-mediated and its maintenance is regulated through SOD1 activation. Requires Cu(2+) as cofactor. The cofactor is Zn(2+). In terms of processing, ubiquitinion by XIAP/BIRC4 leads to enhancement of its chaperone activity toward its physiologic target, SOD1, rather than proteasomal degradation. XIAP/BIRC4 preferentially ubiquitinates at Lys-241. As to expression, ubiquitous.

The protein localises to the cytoplasm. Its function is as follows. Delivers copper to copper zinc superoxide dismutase (SOD1). The sequence is that of Copper chaperone for superoxide dismutase from Mus musculus (Mouse).